We begin with the raw amino-acid sequence, 385 residues long: S-adenosylmethionine synthase (385 aa).

Residue His15 coordinates ATP. Asp17 is a binding site for Mg(2+). Glu43 lines the K(+) pocket. 2 residues coordinate L-methionine: Glu56 and Gln99. The flexible loop stretch occupies residues 99 to 109 (QSPEIAQGVDE). Residues 164–166 (DAK), 230–231 (RF), Asp239, 245–246 (RK), Ala262, and Lys266 contribute to the ATP site. An L-methionine-binding site is contributed by Asp239. Lys270 lines the L-methionine pocket.

This sequence belongs to the AdoMet synthase family. Homotetramer; dimer of dimers. The cofactor is Mg(2+). Requires K(+) as cofactor.

The protein resides in the cytoplasm. The catalysed reaction is L-methionine + ATP + H2O = S-adenosyl-L-methionine + phosphate + diphosphate. Its pathway is amino-acid biosynthesis; S-adenosyl-L-methionine biosynthesis; S-adenosyl-L-methionine from L-methionine: step 1/1. Catalyzes the formation of S-adenosylmethionine (AdoMet) from methionine and ATP. The overall synthetic reaction is composed of two sequential steps, AdoMet formation and the subsequent tripolyphosphate hydrolysis which occurs prior to release of AdoMet from the enzyme. The protein is S-adenosylmethionine synthase of Hydrogenovibrio crunogenus (strain DSM 25203 / XCL-2) (Thiomicrospira crunogena).